The primary structure comprises 218 residues: Protein-L-isoaspartate O-methyltransferase (218 aa).

Residue Ser63 is part of the active site.

This sequence belongs to the methyltransferase superfamily. L-isoaspartyl/D-aspartyl protein methyltransferase family.

It is found in the cytoplasm. The enzyme catalyses [protein]-L-isoaspartate + S-adenosyl-L-methionine = [protein]-L-isoaspartate alpha-methyl ester + S-adenosyl-L-homocysteine. Its function is as follows. Catalyzes the methyl esterification of L-isoaspartyl residues in peptides and proteins that result from spontaneous decomposition of normal L-aspartyl and L-asparaginyl residues. It plays a role in the repair and/or degradation of damaged proteins. The protein is Protein-L-isoaspartate O-methyltransferase of Syntrophus aciditrophicus (strain SB).